An 837-amino-acid polypeptide reads, in one-letter code: Outer membrane usher protein HifC (837 aa).

Positions 1-26 (MKTKIFPLNKIAFACSLLLANPLAWA) are cleaved as a signal peptide. Cysteines 813 and 833 form a disulfide.

It belongs to the fimbrial export usher family.

The protein localises to the cell outer membrane. In terms of biological role, essential for piliation. The polypeptide is Outer membrane usher protein HifC (hifC) (Haemophilus influenzae).